A 163-amino-acid polypeptide reads, in one-letter code: Myosin light chain 2 (163 aa).

EF-hand domains lie at 15-50 (DYIN…LGKT) and 92-127 (PERE…AGFE). Residues Asp-28, Asp-30, Asp-32, and Asp-39 each contribute to the Ca(2+) site.

In terms of assembly, interacts with the IQ domain of MYO1.

It is found in the bud neck. Regulatory light chain for the class II conventional myosin MYO1. May play a role in the disassembly of the MYO1 ring at the bud neck at the end of its contraction during cytokinesis. The polypeptide is Myosin light chain 2 (MLC2) (Saccharomyces cerevisiae (strain ATCC 204508 / S288c) (Baker's yeast)).